A 989-amino-acid polypeptide reads, in one-letter code: Phosphoenolpyruvate carboxylase (989 aa).

Catalysis depends on residues His175 and Lys630.

The protein belongs to the PEPCase type 1 family. The cofactor is Mg(2+).

It catalyses the reaction oxaloacetate + phosphate = phosphoenolpyruvate + hydrogencarbonate. Functionally, forms oxaloacetate, a four-carbon dicarboxylic acid source for the tricarboxylic acid cycle. This Prochlorococcus marinus subsp. pastoris (strain CCMP1986 / NIES-2087 / MED4) protein is Phosphoenolpyruvate carboxylase.